We begin with the raw amino-acid sequence, 429 residues long: Enolase (429 aa).

Gln-163 is a (2R)-2-phosphoglycerate binding site. The active-site Proton donor is Glu-205. Asp-242, Glu-286, and Asp-313 together coordinate Mg(2+). 4 residues coordinate (2R)-2-phosphoglycerate: Lys-338, Arg-367, Ser-368, and Lys-389. Lys-338 functions as the Proton acceptor in the catalytic mechanism.

This sequence belongs to the enolase family. It depends on Mg(2+) as a cofactor.

The protein resides in the cytoplasm. It is found in the secreted. The protein localises to the cell surface. It catalyses the reaction (2R)-2-phosphoglycerate = phosphoenolpyruvate + H2O. It participates in carbohydrate degradation; glycolysis; pyruvate from D-glyceraldehyde 3-phosphate: step 4/5. Functionally, catalyzes the reversible conversion of 2-phosphoglycerate (2-PG) into phosphoenolpyruvate (PEP). It is essential for the degradation of carbohydrates via glycolysis. The chain is Enolase from Citrifermentans bemidjiense (strain ATCC BAA-1014 / DSM 16622 / JCM 12645 / Bem) (Geobacter bemidjiensis).